The sequence spans 359 residues: Transcription factor bHLH130 (359 aa).

Serine 60 is subject to Phosphoserine. A disordered region spans residues 161-186 (EEDEESPSNSNGLRRHCSLSSRPPSS). The span at 167–184 (PSNSNGLRRHCSLSSRPP) shows a compositional bias: polar residues. The region spanning 285–335 (CATHPRSIAERVRRTRISERMRKLQELVPNMDKQTNTSDMLDLAVDYIKDL) is the bHLH domain.

Homodimer.

Its subcellular location is the nucleus. This Arabidopsis thaliana (Mouse-ear cress) protein is Transcription factor bHLH130 (BHLH130).